We begin with the raw amino-acid sequence, 279 residues long: Digeranylgeranylglyceryl phosphate synthase (279 aa).

The next 9 helical transmembrane spans lie at 16 to 36 (LIAGLVGILGATVALGHLPPI), 40 to 60 (LLIFLVVFLECSWGNIINDYF), 77 to 99 (GALSKNIALVYGISLGGVAILIA), 104 to 121 (FEAFIFALGAYLLMYLYA), 124 to 144 (LKPQPFIGNLVVATLTGITPI), 146 to 166 (GAIAVGKIGLAGYLALCAFLV), 192 to 212 (IVWGIESSSKIGVIFSVATII), 220 to 240 (AGIGLGYFPIIIVDGIILWAA), and 259 to 279 (LKIAIYLAVFSFLLGSITKGV).

This sequence belongs to the UbiA prenyltransferase family. DGGGP synthase subfamily. Mg(2+) serves as cofactor.

The protein localises to the cell membrane. It carries out the reaction sn-3-O-(geranylgeranyl)glycerol 1-phosphate + (2E,6E,10E)-geranylgeranyl diphosphate = 2,3-bis-O-(geranylgeranyl)-sn-glycerol 1-phosphate + diphosphate. Its pathway is membrane lipid metabolism; glycerophospholipid metabolism. Functionally, prenyltransferase that catalyzes the transfer of the geranylgeranyl moiety of geranylgeranyl diphosphate (GGPP) to the C2 hydroxyl of (S)-3-O-geranylgeranylglyceryl phosphate (GGGP). This reaction is the second ether-bond-formation step in the biosynthesis of archaeal membrane lipids. In Thermococcus sibiricus (strain DSM 12597 / MM 739), this protein is Digeranylgeranylglyceryl phosphate synthase.